The sequence spans 1163 residues: Putative beta-glucuronidase (1163 aa).

The first 20 residues, 1 to 20, serve as a signal peptide directing secretion; sequence MPRFLKYILGLFLISISAFG.

It belongs to the glycosyl hydrolase 2 family.

The protein localises to the periplasm. The enzyme catalyses a beta-D-glucuronoside + H2O = D-glucuronate + an alcohol. Glycoside hydrolase involved in ulvan degradation. Ulvan is the main polysaccharide component of the Ulvales (green seaweed) cell wall. It is composed of disaccharide building blocks comprising 3-sulfated rhamnose (Rha3S) linked to D-glucuronic acid (GlcA), L-iduronic acid (IduA), or D-xylose (Xyl). The protein is Putative beta-glucuronidase of Formosa agariphila (strain DSM 15362 / KCTC 12365 / LMG 23005 / KMM 3901 / M-2Alg 35-1).